A 249-amino-acid chain; its full sequence is Segregation and condensation protein A (249 aa).

This sequence belongs to the ScpA family. In terms of assembly, component of a cohesin-like complex composed of ScpA, ScpB and the Smc homodimer, in which ScpA and ScpB bind to the head domain of Smc. The presence of the three proteins is required for the association of the complex with DNA.

The protein localises to the cytoplasm. Participates in chromosomal partition during cell division. May act via the formation of a condensin-like complex containing Smc and ScpB that pull DNA away from mid-cell into both cell halves. The protein is Segregation and condensation protein A of Oceanobacillus iheyensis (strain DSM 14371 / CIP 107618 / JCM 11309 / KCTC 3954 / HTE831).